Reading from the N-terminus, the 130-residue chain is Small ribosomal subunit protein bS16 (130 aa).

The segment at 80–130 (AGHTPKKERANMKKAQPGKKAVERAEEKAAKASAAAEAPAEAPAAEAAAEE) is disordered. Basic and acidic residues predominate over residues 99-109 (KAVERAEEKAA). The span at 110–130 (KASAAAEAPAEAPAAEAAAEE) shows a compositional bias: low complexity.

This sequence belongs to the bacterial ribosomal protein bS16 family.

The protein is Small ribosomal subunit protein bS16 of Jannaschia sp. (strain CCS1).